A 438-amino-acid polypeptide reads, in one-letter code: Battenin (438 aa).

Residues 1 to 29 form a disordered region; it reads MGGCAGSRRRLLDSEEEETAPEPRPPRSY. Residues 1–37 are Cytoplasmic-facing; it reads MGGCAGSRRRLLDSEEEETAPEPRPPRSYHKGALWKN. Phosphoserine is present on S14. The helical transmembrane segment at 38–58 threads the bilayer; sequence VMGFWLLGLCNNFSYVVMLSA. Over 59 to 127 the chain is Lumenal; that stretch reads AHDILSHQRA…GLHLLPYSPR (69 aa). The segment at 68–89 is disordered; it reads ASGNQSHVDPDPPPTAHNSSSR. Residues N71 and N85 are each glycosylated (N-linked (GlcNAc...) asparagine). Residues 128–148 form a helical membrane-spanning segment; sequence VLVSGICAAGSFILVAFSHSV. The Cytoplasmic portion of the chain corresponds to 149-151; it reads GTS. The helical transmembrane segment at 152-172 threads the bilayer; it reads LCGVVLASISSGVGEVTFLSL. Topologically, residues 173 to 182 are lumenal; that stretch reads TAFYPRAVIS. The helical transmembrane segment at 183–203 threads the bilayer; that stretch reads WWSSGTGGAGLMGALSYLGLT. At 204–277 the chain is on the cytoplasmic side; that stretch reads QAGLSPQHTL…NLSLQERWTV (74 aa). Residues 236–267 form a disordered region; the sequence is PQDPGGEEEAETSARQPLIDSETPESKPDSSS. Residues 242–244 carry the Lysosomal targeting motif motif; sequence EEE. The short motif at 253–254 is the Lysosomal targeting motif. Required for AP1G1, AP2A2 and AP3D1 interaction element; sequence LI. The helical transmembrane segment at 278–298 threads the bilayer; that stretch reads FKGLLWYIVPLVLVYFAEYFI. The Lumenal segment spans residues 299-346; the sequence is NQGLFELLFFRNTSLNHAQQYRWYQMLYQAGVFVSRSSLHCCRIRFTW. The N-linked (GlcNAc...) asparagine glycan is linked to N310. Residues 347 to 367 form a helical membrane-spanning segment; it reads VLALLQCLNLAFLLVDVWFSF. The Cytoplasmic portion of the chain corresponds to 368 to 438; sequence LPSIYLVFLI…PLHDFLCHLS (71 aa). Positions 409–419 match the Lysosomal targeting motif motif; the sequence is MAAACISDTLG. The residue at position 435 (C435) is a Cysteine methyl ester. C435 is lipidated: S-farnesyl cysteine. A propeptide spans 436-438 (removed in mature form); sequence HLS.

This sequence belongs to the battenin family. In terms of assembly, interacts with DCTN1, KIF3A, RAB7A and RILP. Interacts with CLN5. Highly glycosylated. Post-translationally, farnesylation is important for trafficking to lysosomes.

The protein resides in the lysosome membrane. It is found in the late endosome. The protein localises to the lysosome. In terms of biological role, mediates microtubule-dependent, anterograde transport connecting the Golgi network, endosomes, autophagosomes, lysosomes and plasma membrane, and participates in several cellular processes such as regulation of lysosomal pH, lysosome protein degradation, receptor-mediated endocytosis, autophagy, transport of proteins and lipids from the TGN, apoptosis and synaptic transmission. Facilitates the proteins transport from trans-Golgi network (TGN)-to other membrane compartments such as transport of microdomain-associated proteins to the plasma membrane, IGF2R transport to the lysosome where it regulates the CTSD release leading to regulation of CTSD maturation and thereby APP intracellular processing. Moreover regulates CTSD activity in response to osmotic stress. Also binds galactosylceramide and transports it from the trans Golgi to the rafts, which may have immediate and downstream effects on cell survival by modulating ceramide synthesis. At the plasma membrane, regulates actin-dependent events including filopodia formation, cell migration, and pinocytosis through ARF1-CDC42 pathway and also the cytoskeleton organization through interaction with MYH10 and fodrin leading to the regulation of the plasma membrane association of Na+, K+ ATPase complex. Regulates synaptic transmission in the amygdala, hippocampus, and cerebellum through regulation of synaptic vesicles density and their proximity to active zones leading to modulation of short-term plasticity and age-dependent anxious behavior, learning and memory. Regulates autophagic vacuoles (AVs) maturation by modulating the trafficking between endocytic and autophagolysosomal/lysosomal compartments, which involves vesicle fusion leading to regulation of degradation process. Also participates in cellular homeostasis of compounds such as, water, ions, amino acids, proteins and lipids in several tissue namely in brain and kidney through regulation of their transport and synthesis. In Canis lupus familiaris (Dog), this protein is Battenin.